The chain runs to 140 residues: Nucleoside diphosphate kinase (140 aa).

ATP-binding residues include Lys11, Phe59, Arg87, Thr93, Arg104, and Asn114. The active-site Pros-phosphohistidine intermediate is His117.

This sequence belongs to the NDK family. In terms of assembly, homotetramer. It depends on Mg(2+) as a cofactor.

The protein resides in the cytoplasm. It carries out the reaction a 2'-deoxyribonucleoside 5'-diphosphate + ATP = a 2'-deoxyribonucleoside 5'-triphosphate + ADP. It catalyses the reaction a ribonucleoside 5'-diphosphate + ATP = a ribonucleoside 5'-triphosphate + ADP. Functionally, major role in the synthesis of nucleoside triphosphates other than ATP. The ATP gamma phosphate is transferred to the NDP beta phosphate via a ping-pong mechanism, using a phosphorylated active-site intermediate. This Francisella tularensis subsp. holarctica (strain LVS) protein is Nucleoside diphosphate kinase.